A 427-amino-acid chain; its full sequence is Beta-porphyranase D (427 aa).

Residues 1–19 (MILKQAILTLVLVNANLFA) form the signal peptide. Positions 23–45 (PKTYSSTDKETRQGPPKPPMGKR) are disordered. One can recognise a GH16 domain in the interval 32 to 308 (ETRQGPPKPP…WVRAYRLVDV (277 aa)). Tryptophan 73, arginine 76, glutamate 168, glutamate 173, and glutamate 272 together coordinate substrate. The active-site Nucleophile is the glutamate 168. The Proton donor role is filled by glutamate 173.

It belongs to the glycosyl hydrolase 16 family.

It is found in the periplasm. It carries out the reaction Hydrolysis of beta-D-galactopyranose-(1-&gt;4)-alpha-L-galactopyranose-6-sulfate linkages in porphyran.. Functionally, cleaves the sulfated polysaccharide porphyran at the (1-&gt;4) linkages between beta-D-galactopyranose and alpha-L-galactopyranose-6-sulfate, forming mostly the disaccharide alpha-L-galactopyranose-6-sulfate-(1-&gt;3)-beta-D-galactose. This chain is Beta-porphyranase D (porD), found in Zobellia galactanivorans (strain DSM 12802 / CCUG 47099 / CIP 106680 / NCIMB 13871 / Dsij).